Reading from the N-terminus, the 199-residue chain is Chaperone protein TorD (199 aa).

This sequence belongs to the TorD/DmsD family. TorD subfamily.

The protein resides in the cytoplasm. Its function is as follows. Involved in the biogenesis of TorA. Acts on TorA before the insertion of the molybdenum cofactor and, as a result, probably favors a conformation of the apoenzyme that is competent for acquiring the cofactor. This chain is Chaperone protein TorD, found in Escherichia coli O127:H6 (strain E2348/69 / EPEC).